A 1058-amino-acid chain; its full sequence is Vacuolar protein sorting-associated protein 54 (1058 aa).

Residues 369-389 (SKKIVEVHERYEQKKKLLAKL) are a coiled coil.

Belongs to the VPS54 family. Component of the Golgi-associated retrograde protein (GARP) complex, also called VFT (VPS fifty-three) complex, composed of vps-51, vps-52, vps-53 and vps-54. Within the complex interacts with vps-52 and vps-53.

The protein localises to the golgi apparatus. It localises to the trans-Golgi network. Its function is as follows. Acts as a component of the GARP complex that is involved in retrograde transport from early and late endosomes to the trans-Golgi network (TGN). The GARP complex facilitates tethering as well as SNARE complex assembly at the Golgi. The protein is Vacuolar protein sorting-associated protein 54 of Caenorhabditis elegans.